The following is a 572-amino-acid chain: Nucleolin 1 (572 aa).

2 disordered regions span residues 1–312 and 488–572; these read MGKA…ESAT and DEAK…FGDE. Low complexity predominate over residues 7–21; that stretch reads KSVAVAVAPAAVPAK. Residues 27–38 are compositionally biased toward basic and acidic residues; it reads KREAEDEIEKAV. 2 stretches are compositionally biased toward low complexity: residues 45–58 and 72–81; these read AAAA…PAPK and KAASSSSGSS. 7 stretches are compositionally biased toward acidic residues: residues 82-91, 109-122, 144-156, 177-191, 208-222, 235-247, and 261-276; these read SEEDSSESEE, SSDE…DDED, SESD…DEDE, DSSE…SDED, STDG…EDED, SDEE…ESSD, and ESSE…EEDE. Over residues 300-311 the composition is skewed to polar residues; that stretch reads PASNQSQGTESA. RRM domains lie at 311–387 and 411–492; these read ATLF…LAHE and QSIF…EAKP. 2 stretches are compositionally biased toward basic and acidic residues: residues 488–520 and 528–545; these read DEAK…DRFG and GGRD…DGGR. Polar residues predominate over residues 553–566; it reads QSRQSAGTASTGKK.

The protein resides in the nucleus. Its subcellular location is the nucleolus. Its function is as follows. Involved in pre-rRNA processing and ribosome assembly. The polypeptide is Nucleolin 1 (Oryza sativa subsp. japonica (Rice)).